A 358-amino-acid chain; its full sequence is CCAAT/enhancer-binding protein alpha (358 aa).

The disordered stretch occupies residues 1–55 (MESADFYEAEPRPPMSSHLQSPPHAPSNAAFGFPRGAGPAPPPAPPAAPEPLGGI). The tract at residues 1–70 (MESADFYEAE…SIDISAYIDP (70 aa)) is required to repress E2F1:TFDP1-mediated transcription, to inhibit cell cycle and to induce adipocyte differentiation. The segment covering 29–38 (AAFGFPRGAG) has biased composition (low complexity). Over residues 39 to 49 (PAPPPAPPAAP) the composition is skewed to pro residues. A required for interaction with TRIB1 region spans residues 54 to 72 (GICEHETSIDISAYIDPAA). The segment at 126-200 (PPGYGCAAAG…HASPAHLAAP (75 aa)) is required to induce adipocyte differentiation. Lys159 bears the N6-acetyllysine; alternate mark. A Glycyl lysine isopeptide (Lys-Gly) (interchain with G-Cter in SUMO); alternate cross-link involves residue Lys159. Residue Lys159 forms a Glycyl lysine isopeptide (Lys-Gly) (interchain with G-Cter in SUMO2); alternate linkage. 2 disordered regions span residues 176–195 (LFPYQPPPPPPPPHPHASPA) and 213–310 (TMHL…NVET). Residues 179 to 191 (YQPPPPPPPPHPH) are compositionally biased toward pro residues. The segment at 180-194 (QPPPPPPPPHPHASP) is required to functionally cooperate with SREBF1 in promoter activation. Residue Ser193 is modified to Phosphoserine. Residues 220–234 (HPTPPPTPVPSPHPA) are compositionally biased toward pro residues. Phosphothreonine; by GSK3 is present on residues Thr222 and Thr226. Ser230 bears the Phosphoserine; by GSK3 mark. The interaction with FOXO1 stretch occupies residues 240-358 (AGLPGPGGSL…SLVKAMGNCA (119 aa)). Positions 261-271 (TGGGGGGGAGA) are enriched in gly residues. A compositionally biased stretch (basic and acidic residues) spans 276 to 292 (KSVDKNSNEYRVRRERN). The region spanning 282–345 (SNEYRVRRER…DTLRGIFRQL (64 aa)) is the bZIP domain. Residues 285 to 300 (YRVRRERNNIAVRKSR) mediate DNA binding. Residues 286–313 (RVRRERNNIAVRKSRDKAKQRNVETQQK) form a basic motif region. The tract at residues 317–345 (LTSDNDRLRKRVEQLSRELDTLRGIFRQL) is leucine-zipper.

The protein belongs to the bZIP family. C/EBP subfamily. Binds DNA as a homodimer and as a heterodimer. Can form stable heterodimers with CEBPB, CEBPD, CEBPE and CEBPG. Can form stable homodimers (also isoform 2 and isoform 3 dimers) and heterodimers with CEBPB (with isoform 2 and isoform 3) and CEBPG. Interacts with PRDM16. Interacts with UBN1. Interacts with ZNF638; this interaction increases transcriptional activation. Interacts with the complex TFDP2:E2F1; the interaction prevents CEBPA binding to target gene promoters and represses its transcriptional activity. Interacts with RB1. Interacts (when phosphorylated at Ser-193) with CDK2, CDK4, E2F4 and SMARCA2. Interacts with SREBPF1. Interacts with FOXO1 (via the Fork-head domain); the interaction increases when FOXO1 is deacetylated. Interacts with SIX1. Interacts (via recognition sequence) with TRIB1. In terms of assembly, interacts with TAF1A and UBTF. As to quaternary structure, interacts with NPM1. Sumoylated, sumoylation blocks the inhibitory effect on cell proliferation by disrupting the interaction with SMARCA2. In terms of processing, phosphorylation at Ser-193 is required for interaction with CDK2, CDK4 and SWI/SNF complex leading to cell cycle inhibition. Dephosphorylated at Ser-193 by protein phosphatase 2A (PP2A) through PI3K/AKT signaling pathway regulation. Phosphorylation at Thr-222 and Thr-226 by GSK3 is constitutive in adipose tissue and lung. In liver, both Thr-222 and Thr-226 are phosphorylated only during feeding but not during fasting. Phosphorylation of the GSK3 consensus sites selectively decreases transactivation activity on IRE-controlled promoters. Post-translationally, ubiquitinated by COP1 upon interaction with TRIB1. As to expression, isoform 2 and isoform 3 are expressed in liver (at protein level).

Its subcellular location is the nucleus. It is found in the nucleolus. Functionally, transcription factor that coordinates proliferation arrest and the differentiation of myeloid progenitors, adipocytes, hepatocytes, and cells of the lung and the placenta. Binds directly to the consensus DNA sequence 5'-T[TG]NNGNAA[TG]-3' acting as an activator on distinct target genes. During early embryogenesis, plays essential and redundant functions with CEBPB. Essential for the transition from common myeloid progenitors (CMP) to granulocyte/monocyte progenitors (GMP). Critical for the proper development of the liver and the lung. Necessary for terminal adipocyte differentiation, is required for postnatal maintenance of systemic energy homeostasis and lipid storage. To regulate these different processes at the proper moment and tissue, interplays with other transcription factors and modulators. Down-regulates the expression of genes that maintain cells in an undifferentiated and proliferative state through E2F1 repression, which is critical for its ability to induce adipocyte and granulocyte terminal differentiation. Reciprocally E2F1 blocks adipocyte differentiation by binding to specific promoters and repressing CEBPA binding to its target gene promoters. Proliferation arrest also depends on a functional binding to SWI/SNF complex. In liver, regulates gluconeogenesis and lipogenesis through different mechanisms. To regulate gluconeogenesis, functionally cooperates with FOXO1 binding to IRE-controlled promoters and regulating the expression of target genes such as PCK1 or G6PC1. To modulate lipogenesis, interacts and transcriptionally synergizes with SREBF1 in promoter activation of specific lipogenic target genes such as ACAS2. In adipose tissue, seems to act as FOXO1 coactivator accessing to ADIPOQ promoter through FOXO1 binding sites. Can act as dominant-negative. Binds DNA and have transctivation activity, even if much less efficiently than isoform 2. Does not inhibit cell proliferation. Its function is as follows. Directly and specifically enhances ribosomal DNA transcription interacting with RNA polymerase I-specific cofactors and inducing histone acetylation. The polypeptide is CCAAT/enhancer-binding protein alpha (Rattus norvegicus (Rat)).